Reading from the N-terminus, the 1358-residue chain is DNA-directed RNA polymerase subunit beta (1358 aa).

It belongs to the RNA polymerase beta chain family. As to quaternary structure, the RNAP catalytic core consists of 2 alpha, 1 beta, 1 beta' and 1 omega subunit. When a sigma factor is associated with the core the holoenzyme is formed, which can initiate transcription.

It carries out the reaction RNA(n) + a ribonucleoside 5'-triphosphate = RNA(n+1) + diphosphate. In terms of biological role, DNA-dependent RNA polymerase catalyzes the transcription of DNA into RNA using the four ribonucleoside triphosphates as substrates. This chain is DNA-directed RNA polymerase subunit beta, found in Francisella tularensis subsp. tularensis (strain FSC 198).